We begin with the raw amino-acid sequence, 159 residues long: Intron-encoded endonuclease ai4 (159 aa).

This sequence belongs to the LAGLIDADG endonuclease family.

Its subcellular location is the mitochondrion. In terms of biological role, mitochondrial DNA endonuclease involved in intron homing. This Dictyostelium discoideum (Social amoeba) protein is Intron-encoded endonuclease ai4 (ai4).